We begin with the raw amino-acid sequence, 759 residues long: uncharacterized protein (759 aa).

The 205-residue stretch at 352 to 556 (VIQKLSDYAF…KDEDIADFSI (205 aa)) folds into the MCM domain. Residue 397–404 (SDPGVGKS) coordinates ATP.

The protein belongs to the MCM family.

This is an uncharacterized protein from Methanocaldococcus jannaschii (strain ATCC 43067 / DSM 2661 / JAL-1 / JCM 10045 / NBRC 100440) (Methanococcus jannaschii).